We begin with the raw amino-acid sequence, 210 residues long: Probable GTP-binding protein EngB (210 aa).

The EngB-type G domain occupies 25–199 (TGIEVAFAGR…RQKLDTWFSE (175 aa)). Residues 33–40 (GRSNAGKS), 60–64 (GRTQL), 78–81 (DLPG), 145–148 (TKAD), and 178–180 (FSS) contribute to the GTP site. 2 residues coordinate Mg(2+): S40 and T62.

It belongs to the TRAFAC class TrmE-Era-EngA-EngB-Septin-like GTPase superfamily. EngB GTPase family. It depends on Mg(2+) as a cofactor.

Necessary for normal cell division and for the maintenance of normal septation. This chain is Probable GTP-binding protein EngB, found in Escherichia coli O6:H1 (strain CFT073 / ATCC 700928 / UPEC).